Reading from the N-terminus, the 891-residue chain is uncharacterized protein (891 aa).

Residues Met1–Ala20 form the signal peptide. A run of 6 helical transmembrane segments spans residues Val525–Ile545, Thr568–Ala588, Leu614–Ile634, Val652–Met672, Ile685–Ile705, and Phe776–Leu796.

This sequence belongs to the TrbL/VirB6 family.

The protein resides in the cell membrane. This is an uncharacterized protein from Rickettsia conorii (strain ATCC VR-613 / Malish 7).